A 320-amino-acid polypeptide reads, in one-letter code: Aminoacyl tRNA synthase complex-interacting multifunctional protein 2 (320 aa).

Ser36 carries the phosphoserine modification. Residues 82–162 (TPDADLDVTN…HTHSAVRSVP (81 aa)) form an interaction with PRKN region. The interval 162-225 (PANLLQCFGE…FLFSLFGQKQ (64 aa)) is interaction with TP53. Residues 220-317 (LFGQKQDAVN…NLAPFHTALK (98 aa)) form the GST C-terminal domain.

As to quaternary structure, part of the multisynthetase complex (MSC), a multisubunit complex that groups tRNA ligases for Arg (RARS1), Asp (DARS1), Gln (QARS1), Ile (IARS1), Leu (LARS1), Lys (KARS1), Met (MARS1) the bifunctional ligase for Glu and Pro (EPRS1) and the auxiliary subunits AIMP1/p43, AIMP2/p38 and EEF1E1/p18. Interacts (via N-terminus) with KARS1. Interacts with EPRS1. Forms a linear complex that contains MARS1, EEF1E1, EPRS1 and AIMP2 that is at the core of the multisubunit complex. Binds FUBP1 (via C-terminus). Interacts in both its unphosphorylated and phosphorylated forms with p53/TP53 (via N-terminus) in the nucleus following UV irradiation. Interacts (via N-terminus) with PRKN/parkin (via first RING-type domain). Interacts with TARS3. Post-translationally, phosphorylated on serine residues in response to UV irradiation. Ubiquitinated by PRKN, leading to its degradation by the proteasome.

Its subcellular location is the cytoplasm. It localises to the cytosol. The protein resides in the nucleus. In terms of biological role, required for assembly and stability of the aminoacyl-tRNA synthase complex. Mediates ubiquitination and degradation of FUBP1, a transcriptional activator of MYC, leading to MYC down-regulation which is required for aveolar type II cell differentiation. Blocks MDM2-mediated ubiquitination and degradation of p53/TP53. Functions as a proapoptotic factor. The chain is Aminoacyl tRNA synthase complex-interacting multifunctional protein 2 (AIMP2) from Bos taurus (Bovine).